The primary structure comprises 242 residues: tRNA (guanine-N(1)-)-methyltransferase (242 aa).

S-adenosyl-L-methionine-binding positions include Gly-108 and 127 to 132 (IGDYVL).

The protein belongs to the RNA methyltransferase TrmD family. As to quaternary structure, homodimer.

It is found in the cytoplasm. The enzyme catalyses guanosine(37) in tRNA + S-adenosyl-L-methionine = N(1)-methylguanosine(37) in tRNA + S-adenosyl-L-homocysteine + H(+). Its function is as follows. Specifically methylates guanosine-37 in various tRNAs. In Lactobacillus acidophilus (strain ATCC 700396 / NCK56 / N2 / NCFM), this protein is tRNA (guanine-N(1)-)-methyltransferase.